A 183-amino-acid polypeptide reads, in one-letter code: Translocon-associated protein subunit beta (183 aa).

An N-terminal signal peptide occupies residues 1–17 (MRLLAFAVLALFAVTQA). Over 18 to 146 (EEGARLLASK…REFDRRFSPH (129 aa)) the chain is Lumenal. An N-linked (GlcNAc...) asparagine glycan is attached at Asn-88. Residues 147 to 167 (FLDWAAFGVMTLPSIGVPLLL) traverse the membrane as a helical segment. Over 168–183 (WYSSKRKYDTPKTKKN) the chain is Cytoplasmic.

This sequence belongs to the TRAP-beta family. As to quaternary structure, heterotetramer of TRAP-alpha, TRAP-beta, TRAP-delta and TRAP-gamma. Interacts with STING1.

The protein resides in the endoplasmic reticulum membrane. In terms of biological role, TRAP proteins are part of a complex whose function is to bind calcium to the ER membrane and thereby regulate the retention of ER resident proteins. In Bos taurus (Bovine), this protein is Translocon-associated protein subunit beta (SSR2).